Consider the following 347-residue polypeptide: NADH-ubiquinone oxidoreductase chain 2 (347 aa).

11 helical membrane-spanning segments follow: residues 3–23 (PPILIIIMSTVMSGTMIVLTS), 25–45 (HWLLTWIGFEMNMLAIIPILM), 60–80 (FLTQATASMLLMMGIIINLMF), 96–116 (GLVTIALTMKLGMAPFHFWVP), 122–142 (ISLSSGMILLTWQKIAPLSVL), 153–173 (LLITMAIASVLIGGWGGLNQT), 178–198 (ILAYSSIAHMGWMTVILTYNP), 200–220 (LMVLNLTIYITMTLSTFMLFM), 237–257 (LPLMTSLILMLMMSLGGLPPL), 274–294 (DMIILPTFMAITALLNLYFYM), and 323–343 (IILLPPLIIISTMLLPMTPMM).

Belongs to the complex I subunit 2 family. As to quaternary structure, core subunit of respiratory chain NADH dehydrogenase (Complex I) which is composed of 45 different subunits. Interacts with TMEM242.

Its subcellular location is the mitochondrion inner membrane. It catalyses the reaction a ubiquinone + NADH + 5 H(+)(in) = a ubiquinol + NAD(+) + 4 H(+)(out). In terms of biological role, core subunit of the mitochondrial membrane respiratory chain NADH dehydrogenase (Complex I) which catalyzes electron transfer from NADH through the respiratory chain, using ubiquinone as an electron acceptor. Essential for the catalytic activity and assembly of complex I. The sequence is that of NADH-ubiquinone oxidoreductase chain 2 from Phoca vitulina (Harbor seal).